The chain runs to 530 residues: Apolipoprotein N-acyltransferase (530 aa).

Transmembrane regions (helical) follow at residues 19-39 (LIAGLAAALAHPPFGVLPGLL), 65-85 (WLAGVGYFGLGTWWVGEAFLV), 96-116 (FAVTGMAAGLALFWGLAALLY), 128-148 (LTFAGAFAALEWMRGHVLTGF), 169-189 (LVGAYGLTWITLAIAGAPAVW), and 197-217 (AATGLAVASLIGLYGYGAIAL). The 254-residue stretch at 232-485 (VQADIKQDLK…SGVIDAQIPG (254 aa)) folds into the CN hydrolase domain. The active-site Proton acceptor is the Glu-274. The active site involves Lys-343. The active-site Nucleophile is the Cys-396.

Belongs to the CN hydrolase family. Apolipoprotein N-acyltransferase subfamily.

Its subcellular location is the cell inner membrane. It catalyses the reaction N-terminal S-1,2-diacyl-sn-glyceryl-L-cysteinyl-[lipoprotein] + a glycerophospholipid = N-acyl-S-1,2-diacyl-sn-glyceryl-L-cysteinyl-[lipoprotein] + a 2-acyl-sn-glycero-3-phospholipid + H(+). It participates in protein modification; lipoprotein biosynthesis (N-acyl transfer). Catalyzes the phospholipid dependent N-acylation of the N-terminal cysteine of apolipoprotein, the last step in lipoprotein maturation. This Caulobacter vibrioides (strain ATCC 19089 / CIP 103742 / CB 15) (Caulobacter crescentus) protein is Apolipoprotein N-acyltransferase.